The chain runs to 478 residues: Septin-4 (478 aa).

Residues 1–115 (MDHSLGWQGN…RSPWGKLDPY (115 aa)) are disordered. Phosphoserine is present on residues Ser-28, Ser-29, and Ser-68. Positions 84–93 (PQPSDSQQYF) are enriched in polar residues. Residues 94 to 108 (SAPAPLSPSSRPRSP) are compositionally biased toward low complexity. A phosphoserine mark is found at Ser-117 and Ser-118. Residues 141-414 (KGFDFTLMVA…ENYRAQCIQS (274 aa)) form the Septin-type G domain. A G1 motif region spans residues 151–158 (GESGLGKS). GTP contacts are provided by residues 151 to 158 (GESGLGKS) and Thr-185. The tract at residues 208-211 (DTPG) is G3 motif. The segment at 289–292 (AKAD) is G4 motif. 290-298 (KADTLTPPE) serves as a coordination point for GTP. Ser-325 is modified (phosphoserine). Gly-348 and Arg-363 together coordinate GTP. The disordered stretch occupies residues 428 to 449 (LTRESGTDFPIPAVPPGTDPET). Phosphoserine is present on Ser-432. Thr-434 carries the phosphothreonine modification. A coiled-coil region spans residues 447–478 (PETEKLIREKDEELRRMQEMLHKIQRQMKETH).

Belongs to the TRAFAC class TrmE-Era-EngA-EngB-Septin-like GTPase superfamily. Septin GTPase family. As to quaternary structure, septins polymerize into heterooligomeric protein complexes that form filaments, and can associate with cellular membranes, actin filaments and microtubules. GTPase activity is required for filament formation. Interacts with SEPTIN8. Component of a septin core octameric complex consisting of SEPTIN12, SEPTIN7, SEPTIN6 and SEPTIN2 or SEPTIN4 in the order 12-7-6-2-2-6-7-12 or 12-7-6-4-4-6-7-12. Interacts with SEPTIN14 (via C-terminus). Interacts with DYRK1A. Interacts with SLC6A3/DAT and SNCA/alpha-synuclein. Interacts with STX1A; in the striatum. Interacts with XIAP (via BIR3 domain) following the induction of apoptosis. Interacts with AREL1 (via HECT domain); in the cytoplasm following induction of apoptosis. In terms of assembly, interacts with DPYSL5. Phosphorylated by DYRK1A. Post-translationally, ubiquitinated by AREL1. In terms of processing, may be phosphorylated. As to expression, expressed in the cerebral cortex, striatum, midbrain, cerebellum and spinal cord (at protein level). Expressed in the substantia nigra pars compacta, ventral tegmental area, projection fiber bundles and in axon terminals surrounding striatal neurons (at protein level). Expressed in hair follicle stem cells (at protein level). Expressed in small intestinal crypts; abundantly expressed at the crypt base (at protein level). Widely expressed in the brain and to a lesser extent in the testis, lung and liver. In terms of tissue distribution, highly expressed in the brain and testis and, to a lesser extent in the heart, lung and kidney. In the brain, abundant in areas of high cell density, particularly in the stria terminalis. Expressed in the entorhinal, temporal and visual cortices and the hippocampus of the brain where is colocalizes with DYRK1A in postnatal day 1 and adult mice. Expressed and extensively colocalizes with DYRK1A in apical dendrites of pyramidal cells. Predominantly expressed in embryonic brain and dorsal root ganglion neurons. As to expression, expressed in LGR5-positive intestinal stem cells and lysozyme-positive Paneth cells (at protein level). Expressed in the brain and testis.

Its subcellular location is the cytoplasm. The protein localises to the cell projection. It localises to the cilium. The protein resides in the flagellum. It is found in the cytoplasmic vesicle. Its subcellular location is the secretory vesicle. The protein localises to the axon. It localises to the dendrite. The protein resides in the perikaryon. It is found in the synapse. Its subcellular location is the mitochondrion. The protein localises to the cytosol. In terms of biological role, filament-forming cytoskeletal GTPase. Pro-apoptotic protein involved in LGR5-positive intestinal stem cell and Paneth cell expansion in the intestines, via its interaction with XIAP. May also play a role in the regulation of cell fate in the intestine. Positive regulator of apoptosis involved in hematopoietic stem cell homeostasis; via its interaction with XIAP. Negative regulator of repair and hair follicle regeneration in response to injury, due to inhibition of hair follicle stem cell proliferation, potentially via its interaction with XIAP. Plays an important role in male fertility and sperm motility. During spermiogenesis, essential for the establishment of the annulus (a fibrous ring structure connecting the midpiece and the principal piece of the sperm flagellum) which is a requisite for the structural and mechanical integrity of the sperm. Involved in the migration of cortical neurons and the formation of neuron leading processes during embryonic development. Required for dopaminergic metabolism in presynaptic autoreceptors; potentially via activity as a presynaptic scaffold protein. This Mus musculus (Mouse) protein is Septin-4.